The sequence spans 340 residues: Protein phosphatase PTC7 homolog fig (340 aa).

Residues 58-314 (RAQAETIQAP…DDITVVLASV (257 aa)) form the PPM-type phosphatase domain. The Mn(2+) site is built by aspartate 90, glycine 91, and aspartate 236.

Belongs to the PP2C family. The cofactor is Mg(2+). Mn(2+) is required as a cofactor.

It catalyses the reaction O-phospho-L-seryl-[protein] + H2O = L-seryl-[protein] + phosphate. The enzyme catalyses O-phospho-L-threonyl-[protein] + H2O = L-threonyl-[protein] + phosphate. This is Protein phosphatase PTC7 homolog fig from Drosophila pseudoobscura pseudoobscura (Fruit fly).